Consider the following 274-residue polypeptide: Large ribosomal subunit protein uL2 (274 aa).

Disordered stretches follow at residues 37-59 (KAKN…GGHK) and 222-262 (GAAM…RTNK). The span at 50–59 (TTRHKGGGHK) shows a compositional bias: basic residues.

It belongs to the universal ribosomal protein uL2 family. As to quaternary structure, part of the 50S ribosomal subunit. Forms a bridge to the 30S subunit in the 70S ribosome.

One of the primary rRNA binding proteins. Required for association of the 30S and 50S subunits to form the 70S ribosome, for tRNA binding and peptide bond formation. It has been suggested to have peptidyltransferase activity; this is somewhat controversial. Makes several contacts with the 16S rRNA in the 70S ribosome. This Alcanivorax borkumensis (strain ATCC 700651 / DSM 11573 / NCIMB 13689 / SK2) protein is Large ribosomal subunit protein uL2.